We begin with the raw amino-acid sequence, 512 residues long: Transactivator/viroplasmin protein (512 aa).

Disordered regions lie at residues 76 to 123 (GNER…NPVA) and 474 to 512 (ADSS…IPSI). A compositionally biased stretch (polar residues) spans 476 to 487 (SSSTSGEQNNVE). Basic and acidic residues predominate over residues 499-512 (YDERSDDHKRIPSI).

It belongs to the caulimoviridae viroplasmin family.

It is found in the host cytoplasm. In terms of biological role, enhances the translation of downstream ORFs on polycistronic mRNAs derived from figwort mosaic virus. This Figwort mosaic virus (strain DxS) (FMV) protein is Transactivator/viroplasmin protein.